The chain runs to 332 residues: Ribose operon repressor (332 aa).

The HTH lacI-type domain maps to 2–56; that stretch reads ATMKDIARLAQVSTSTVSHVINGSRFVSDEIREKVMRIVAELNYTPSAVARSLKV. The H-T-H motif DNA-binding region spans 4–23; sequence MKDIARLAQVSTSTVSHVIN.

Functionally, transcriptional repressor for the ribose rbsDACBK operon. In Haemophilus influenzae (strain ATCC 51907 / DSM 11121 / KW20 / Rd), this protein is Ribose operon repressor (rbsR).